Reading from the N-terminus, the 136-residue chain is UPF0213 protein AHA_3736 (136 aa).

The GIY-YIG domain occupies 17–92 (SHWFIYMVRT…KQQSKAFKEQ (76 aa)). The disordered stretch occupies residues 114–136 (QKRPRYAAAKEGSDNRECQRQVD). Over residues 124–136 (EGSDNRECQRQVD) the composition is skewed to basic and acidic residues.

This sequence belongs to the UPF0213 family.

The sequence is that of UPF0213 protein AHA_3736 from Aeromonas hydrophila subsp. hydrophila (strain ATCC 7966 / DSM 30187 / BCRC 13018 / CCUG 14551 / JCM 1027 / KCTC 2358 / NCIMB 9240 / NCTC 8049).